A 22-amino-acid chain; its full sequence is Odorant-binding protein 1 (22 aa).

It belongs to the calycin superfamily. Lipocalin family. In terms of assembly, homodimer. The N-terminus is blocked.

In terms of biological role, binds the chemical odorant, 2-isobutyl-3-methoxypyrazine. This chain is Odorant-binding protein 1, found in Oryctolagus cuniculus (Rabbit).